The chain runs to 380 residues: Actinidain (380 aa).

The first 24 residues, 1 to 24 (MGLPKSFVSMSLLFFSTLLILSLA), serve as a signal peptide directing secretion. A propeptide spans 25-126 (FNAKNLTQRT…NQYEPRVGQV (102 aa)) (activation peptide). 3 disulfides stabilise this stretch: Cys148/Cys191, Cys182/Cys224, and Cys282/Cys332. The active site involves Cys151. An E64-binding site is contributed by Cys151. Catalysis depends on residues His288 and Asn308.

Belongs to the peptidase C1 family. Fruit.

It carries out the reaction Specificity close to that of papain.. Repressed by the active-site-directed cysteine protease inhibitor E64 (L-trans-epoxysuccinyl-leucylamide-(4-guanido)-butane) produced by Aspergillus japonicus. Its function is as follows. Cysteine protease responsible for the cleavage of kiwellin into kissper and KiTH. The sequence is that of Actinidain from Actinidia chinensis var. chinensis (Chinese soft-hair kiwi).